The sequence spans 56 residues: MADVSERTLQVSVLVAFASGVVLGWQANRLRRRYLDWRKRRLQDKLATTQKKLDLA.

The Mitochondrial matrix portion of the chain corresponds to 2 to 9 (ADVSERTL). The helical transmembrane segment at 10–27 (QVSVLVAFASGVVLGWQA) threads the bilayer. The Mitochondrial intermembrane segment spans residues 28-56 (NRLRRRYLDWRKRRLQDKLATTQKKLDLA).

The protein belongs to the mitoregulin family. In terms of assembly, interacts with mitochondrial trifunctional enzyme, a heterotetrameric complex composed of 2 HADHA subunits and 2 HADHB subunits. Interacts with cytochrome b5 reductase CYB5R3; the interaction is required to maintain cellular lipid composition and leads to stimulation of mitochondrial respiratory complex I activity. Interacts with ATP synthase subunit ATP5F1B/ATP5B. In terms of tissue distribution, enriched in heart and skeletal muscle (at protein level). Also enriched in adipose tissue with lower levels detected in liver, pancreas and brain (at protein level). Higher levels in differentiated myotubes than in satellite cells.

The protein resides in the mitochondrion inner membrane. Functionally, positively regulates mitochondrial complex assembly and/or stability. Increases mitochondrial membrane potential while decreasing mitochondrial reactive oxygen species. Increases mitochondrial respiration rate. Increased mitochondrial respiratory activity promotes myogenic differentiation which facilitates muscle growth and regeneration. Increases mitochondrial calcium retention capacity. Plays a role in maintenance of cellular lipid composition through its interaction with cytochrome b5 reductase CYB5R3 which is required for mitochondrial respiratory complex I activity. Interacts with the mitochondrial trifunctional enzyme complex (MTE) and enhances fatty acid beta-oxidation. Not required for MTE formation or stability. Modulates triglyceride clearance in adipocytes through its role in regulating fatty acid beta-oxidation and lipolysis. The chain is Mitoregulin from Mus musculus (Mouse).